Here is a 186-residue protein sequence, read N- to C-terminus: Lipid A palmitoyltransferase PagP (186 aa).

An N-terminal signal peptide occupies residues 1–25 (MKVSKYVAIFFFVFIQLISVGKVFA). Residues histidine 58, aspartate 101, and serine 102 contribute to the active site.

This sequence belongs to the lipid A palmitoyltransferase family. In terms of assembly, homodimer.

It is found in the cell outer membrane. It catalyses the reaction lipid A (E. coli) + a 1-hexadecanoyl-2-acyl-sn-glycero-3-phosphocholine = hepta-acyl lipid A (E. coli) + a 2-acyl-sn-glycero-3-phosphocholine. It carries out the reaction lipid IIA + a 1-hexadecanoyl-2-acyl-sn-glycero-3-phosphocholine = lipid IIB + a 2-acyl-sn-glycero-3-phosphocholine. The enzyme catalyses lipid IVA (E. coli) + a 1-hexadecanoyl-2-acyl-sn-glycero-3-phosphocholine = lipid IVB (E. coli) + a 2-acyl-sn-glycero-3-phosphocholine. Functionally, transfers a palmitate residue from the sn-1 position of a phospholipid to the N-linked hydroxymyristate on the proximal unit of lipid A or its precursors. The sequence is that of Lipid A palmitoyltransferase PagP from Escherichia coli O6:K15:H31 (strain 536 / UPEC).